Consider the following 349-residue polypeptide: Probable ethanolamine kinase A (349 aa).

The protein belongs to the choline/ethanolamine kinase family.

It is found in the cytoplasm. It catalyses the reaction ethanolamine + ATP = phosphoethanolamine + ADP + H(+). The protein operates within phospholipid metabolism; phosphatidylethanolamine biosynthesis; phosphatidylethanolamine from ethanolamine: step 1/3. Its function is as follows. Highly specific for ethanolamine phosphorylation. May be a rate-controlling step in phosphatidylethanolamine biosynthesis. In Dictyostelium discoideum (Social amoeba), this protein is Probable ethanolamine kinase A (etnkA).